The following is a 235-amino-acid chain: 1-Cys peroxiredoxin (235 aa).

In terms of domain architecture, Thioredoxin spans 5–179; that stretch reads ILLGDKFPDF…ILRVVDSLQL (175 aa). Cys-49 is an active-site residue. The active-site Cysteine sulfenic acid (-SOH) intermediate is the Cys-49.

This sequence belongs to the peroxiredoxin family. Prx6 subfamily.

The protein localises to the cytoplasm. The enzyme catalyses a hydroperoxide + [protein]-dithiol = [protein]-disulfide + an alcohol + H2O. Thiol-specific peroxidase that catalyzes the reduction of hydrogen peroxide and organic hydroperoxides to water and alcohols, respectively. Plays a role in cell protection against oxidative stress by detoxifying peroxides. This is 1-Cys peroxiredoxin from Dirofilaria immitis (Canine heartworm).